The primary structure comprises 112 residues: High mobility group protein D (112 aa).

The HMG box DNA-binding region spans 5 to 71; it reads PKRPLSAYML…DYDRAVKEFE (67 aa). At Ser10 the chain carries Phosphoserine. Tyr12 bears the Phosphotyrosine mark. Residues 72 to 112 are disordered; the sequence is ANGGSSAANGGGAKKRAKPAKKVAKKSKKEESDEDDDDESE. The segment covering 84 to 98 has biased composition (basic residues); the sequence is AKKRAKPAKKVAKKS. Phosphoserine occurs at positions 103 and 111. A compositionally biased stretch (acidic residues) spans 103-112; that stretch reads SDEDDDDESE.

The protein belongs to the HMGB family.

The protein resides in the nucleus. It is found in the chromosome. In terms of biological role, binds preferentially single-stranded DNA and unwinds double-stranded DNA. Prefers sites containing the sequence 5'-ttg-3'. Facilitates DNA bending. Associated with early embryonic chromatin in the absence of histone H1. The protein is High mobility group protein D (HmgD) of Drosophila melanogaster (Fruit fly).